Consider the following 183-residue polypeptide: Protein CT_584 (183 aa).

The protein belongs to the chlamydial CPn_0803/CT_584/TC_0873 family.

This is Protein CT_584 from Chlamydia trachomatis serovar D (strain ATCC VR-885 / DSM 19411 / UW-3/Cx).